We begin with the raw amino-acid sequence, 197 residues long: MTDSDGKTDKSGEPAAEVEPVVSKPYVMPDDPEDDALDALNKQLAEAKDRTLRTLAEMENLRKRTAREVSDARTYGISGFARDVLEIADNLQRALDAVPADARAAPDPGLKALIEGVELTERSLHNALEKHGVKKFDPAGEKFDPNVHQAMYEVPDPSIPVGTVAQVIQAGYMIGERVLRPALVGVAKGGAKAAAPE.

Residues 1-12 are compositionally biased toward basic and acidic residues; that stretch reads MTDSDGKTDKSG. Residues 1–35 form a disordered region; that stretch reads MTDSDGKTDKSGEPAAEVEPVVSKPYVMPDDPEDD.

The protein belongs to the GrpE family. Homodimer.

The protein resides in the cytoplasm. Its function is as follows. Participates actively in the response to hyperosmotic and heat shock by preventing the aggregation of stress-denatured proteins, in association with DnaK and GrpE. It is the nucleotide exchange factor for DnaK and may function as a thermosensor. Unfolded proteins bind initially to DnaJ; upon interaction with the DnaJ-bound protein, DnaK hydrolyzes its bound ATP, resulting in the formation of a stable complex. GrpE releases ADP from DnaK; ATP binding to DnaK triggers the release of the substrate protein, thus completing the reaction cycle. Several rounds of ATP-dependent interactions between DnaJ, DnaK and GrpE are required for fully efficient folding. This chain is Protein GrpE, found in Nitrobacter winogradskyi (strain ATCC 25391 / DSM 10237 / CIP 104748 / NCIMB 11846 / Nb-255).